The primary structure comprises 1186 residues: DNA excision repair protein ERCC-5 (1186 aa).

The interval 1 to 78 (MGVQGLWKLL…RIRPIFVFDG (78 aa)) is N-domain. N6-acetyllysine is present on lysine 8. Residue aspartate 30 coordinates Mg(2+). The segment at 31 to 67 (ISIWLNQALKGVRDRHGNSIENPHLLTLFHRLCKLLF) is DNA-binding; may bind to the undamaged single-strand DNA of the DNA repair bubble. Aspartate 77 contributes to the Mg(2+) binding site. The tract at residues 79–785 (DAPLLKKQTL…LRLFGIPYIQ (707 aa)) is spacer region. Disordered regions lie at residues 306–342 (ESLP…PPSP), 354–385 (GSSS…SISP), 404–473 (CAGD…SVPK), 510–533 (HSDA…TNSV), and 667–724 (QAEF…AEDS). The segment covering 325-336 (PCEKLKTEKEPD) has biased composition (basic and acidic residues). Serine 384 carries the post-translational modification Phosphoserine. The span at 454–472 (AEEHVASTNEGREPTDSVP) shows a compositional bias: basic and acidic residues. Serine 705 carries the post-translational modification Phosphoserine. Positions 786–881 (APMEAEAQCA…VTAMEILNEF (96 aa)) are I-domain. Residues glutamate 789, glutamate 791, aspartate 810, and aspartate 812 each contribute to the Mg(2+) site. Residues 820–836 (HVYRNFFNKNKFVEYYQ) are DNA-binding; may bind to the undamaged single-strand DNA of the DNA repair bubble. The segment at 848–880 (RNKLINLAYLLGSDYTEGIPTVGCVTAMEILNE) is DNA-binding; H2TH (helix-2turn-helix) motif which binds double-stranded DNA. Aspartate 861 contacts Mg(2+). The tract at residues 912–918 (TKVKKKL) is DNA-binding; may bind double-stranded DNA. The interval 981 to 1009 (LKQLDAQQTQLRIDSFFRLAQQEKEDAKR) is interaction with PCNA. An interaction with ERCC6/CSB region spans residues 1011–1186 (KSQRLNRAVT…RRARGRKRKT (176 aa)). Disordered regions lie at residues 1056-1081 (QKRG…SKGK) and 1095-1186 (ESSD…KRKT). The Nuclear localization signal 1 signature appears at 1057–1074 (KRGITNTLEESSSLKRKR). Positions 1124 to 1133 (TSASDSQNSV) are enriched in polar residues. Residues 1169–1186 (FGKKRRKLRRARGRKRKT) carry the Nuclear localization signal 2 motif. Positions 1169 to 1186 (FGKKRRKLRRARGRKRKT) are enriched in basic residues.

It belongs to the XPG/RAD2 endonuclease family. XPG subfamily. In terms of assembly, monomer. Homodimer. Component of the homologous recombination repair (HR) complex composed of ERCC5/XPG, BRCA2, PALB2, DSS1 and RAD51. Within the complex, interacts with BRCA2 and PALB2. Interacts with RNA polymerase II. Interacts (via C-terminus) with ERCC6/CSB; the interaction stimulates ERCC6/CSB binding to the DNA repair bubble and ERCC6/CSB ATPase activity. May form a complex composed of RNA polymerase II, ERCC6/CSB and ERCC5/XPG which associates with the DNA repair bubble during transcription-coupled nucleotide excision repair. Interacts with BRCA1; the interaction promotes the release of BRCA1 from DNA. Interacts with PCNA. Interacts with NTHL1; the interaction stimulates NTHL1 activity and NTHL1 binding to its DNA substrate. Mg(2+) serves as cofactor.

It is found in the nucleus. Its subcellular location is the chromosome. In terms of biological role, single-stranded structure-specific DNA endonuclease involved in DNA excision repair. Makes the 3'incision in DNA nucleotide excision repair (NER). Binds and bends DNA repair bubble substrate and breaks base stacking at the single-strand/double-strand DNA junction of the DNA bubble. Plays a role in base excision repair (BER) by promoting the binding of DNA glycosylase NTHL1 to its substrate and increasing NTHL1 catalytic activity that removes oxidized pyrimidines from DNA. Involved in transcription-coupled nucleotide excision repair (TCR) which allows RNA polymerase II-blocking lesions to be rapidly removed from the transcribed strand of active genes. Functions during the initial step of TCR in cooperation with ERCC6/CSB to recognized stalled RNA polymerase II. Also, stimulates ERCC6/CSB binding to the DNA repair bubble and ERCC6/CSB ATPase activity. Required for DNA replication fork maintenance and preservation of genomic stability. Involved in homologous recombination repair (HRR) induced by DNA replication stress by recruiting RAD51, BRCA2, and PALB2 to the damaged DNA site. In TFIIH stimulates the 5'-3' helicase activity of XPD/ERCC2 and the DNA translocase activity of XPB/ERCC3. During HRR, binds to the replication fork with high specificity and stabilizes it. Also, acts upstream of HRR, to promote the release of BRCA1 from DNA. This Homo sapiens (Human) protein is DNA excision repair protein ERCC-5 (ERCC5).